Consider the following 623-residue polypeptide: Dynein axonemal intermediate chain 2 (623 aa).

WD repeat units follow at residues 214–254 (KPLS…LVAE), 261–302 (SHRD…EPIE), 362–401 (GHHG…SSIM), 405–445 (YHMA…CDPA), and 450–489 (VCDD…STLQ). The disordered stretch occupies residues 565–602 (AEALKKKPKPRKKSSVKVEAEEEVEENVGEEEEAGGII). Positions 570 to 579 (KKPKPRKKSS) are enriched in basic residues. The segment covering 584–598 (AEEEVEENVGEEEEA) has biased composition (acidic residues).

It belongs to the dynein intermediate chain family. Consists of at least two heavy chains and a number of intermediate and light chains. Interacts with DNAAF2. Interacts with DNAAF6/PIH1D3. Interacts with HEATR2; probably involved in outer arm dynein assembly. Interacts with CFAP53. Predominantly expressed in ovary, testis and lung.

The protein resides in the cytoplasm. It is found in the cytoskeleton. Its subcellular location is the cilium axoneme. The protein localises to the dynein axonemal particle. In terms of biological role, part of the dynein complex of respiratory cilia. This chain is Dynein axonemal intermediate chain 2 (Dnai2), found in Mus musculus (Mouse).